A 486-amino-acid chain; its full sequence is MSYNNKSIKELHELLVNKEISALELTKATLSDISAREPQIDAFLKITEEKALQDAAAIDARGINPDVVTDGISIAVKDNIVTEGIETTAASKILGGWIPPYNATVANKLSESGLITIGKLNMDEFAMGGSGENSSVKPTKNAWDQTKVPGGSSSGSAASVASGQVRLSLGSDTGGSIRQPAAFNGIVGLKPTYGRVSRFGLIAFASSLDQIGPLAPTVEENAQLLNVISGFDKNDSTSSNVAVPDFTSKIGQDIKGMKIALPKEYFGEGIDEKVKEQILAAAKHLEKLGAIVEEVSLPHSKYGVAVYYIIASSEASSNLQRFDGIRYGYRAQDIKNLEDLYVKSRSEGFGPEVQRRIMLGTFSLSAGSYDKHFKKAGQVRTLIINDFAKVFEKYDLILGPTTPTPAWDLGARVDDPLSMYLADLLTIPVNLAGLPGISIPAGFADGLPVGMQLIGKRYDEETIYKVAAAFEATTDFHKKQPIIFGK.

Catalysis depends on Lys-77, which acts as the Charge relay system. The tract at residues 130-158 is disordered; sequence SGENSSVKPTKNAWDQTKVPGGSSSGSAA. A compositionally biased stretch (polar residues) spans 132–144; that stretch reads ENSSVKPTKNAWD. Catalysis depends on Ser-152, which acts as the Charge relay system. The active-site Acyl-ester intermediate is the Ser-176.

This sequence belongs to the amidase family. GatA subfamily. Heterotrimer of A, B and C subunits.

It carries out the reaction L-glutamyl-tRNA(Gln) + L-glutamine + ATP + H2O = L-glutaminyl-tRNA(Gln) + L-glutamate + ADP + phosphate + H(+). Its function is as follows. Allows the formation of correctly charged Gln-tRNA(Gln) through the transamidation of misacylated Glu-tRNA(Gln) in organisms which lack glutaminyl-tRNA synthetase. The reaction takes place in the presence of glutamine and ATP through an activated gamma-phospho-Glu-tRNA(Gln). The protein is Glutamyl-tRNA(Gln) amidotransferase subunit A (gatA) of Lactococcus lactis subsp. lactis (strain IL1403) (Streptococcus lactis).